The following is a 175-amino-acid chain: NAD(P)H-quinone oxidoreductase subunit J (175 aa).

This sequence belongs to the complex I 30 kDa subunit family. As to quaternary structure, NDH-1 can be composed of about 15 different subunits; different subcomplexes with different compositions have been identified which probably have different functions.

The protein resides in the cellular thylakoid membrane. The enzyme catalyses a plastoquinone + NADH + (n+1) H(+)(in) = a plastoquinol + NAD(+) + n H(+)(out). It carries out the reaction a plastoquinone + NADPH + (n+1) H(+)(in) = a plastoquinol + NADP(+) + n H(+)(out). NDH-1 shuttles electrons from an unknown electron donor, via FMN and iron-sulfur (Fe-S) centers, to quinones in the respiratory and/or the photosynthetic chain. The immediate electron acceptor for the enzyme in this species is believed to be plastoquinone. Couples the redox reaction to proton translocation, and thus conserves the redox energy in a proton gradient. Cyanobacterial NDH-1 also plays a role in inorganic carbon-concentration. In Trichormus variabilis (strain ATCC 29413 / PCC 7937) (Anabaena variabilis), this protein is NAD(P)H-quinone oxidoreductase subunit J.